Here is a 690-residue protein sequence, read N- to C-terminus: Cyclic nucleotide-gated channel alpha-1 (690 aa).

The Cytoplasmic portion of the chain corresponds to 1-163; sequence MKKVIINTWH…VVIDPSGNTY (163 aa). 2 disordered regions span residues 33-76 and 88-151; these read GACS…PSQR and NVNN…EEKK. Residues 40-54 show a composition bias toward acidic residues; the sequence is GDDDDSASMFEESET. A compositionally biased stretch (polar residues) spans 64–76; it reads RSNTHGSGQPSQR. The segment covering 111–151 has biased composition (basic and acidic residues); sequence SKPDDKNENKKDPEKKKKKEKDKDKKKKEEKGKDKKEEEKK. Residues 164–185 traverse the membrane as a helical segment; the sequence is YNWLFCITLPVMYNWTMIIARA. The Extracellular segment spans residues 186–195; the sequence is CFDELQSDYL. Residues 196–215 form a helical membrane-spanning segment; it reads EYWLAFDYLSDVVYLLDMFV. Over 216 to 241 the chain is Cytoplasmic; that stretch reads RTRTGYLEQGLLVKEERKLIDKYKST. Residues 242–251 form a helical membrane-spanning segment; the sequence is FQFKLDVLSV. Over 252–264 the chain is Extracellular; that stretch reads IPTDLLYIKFGWN. The chain crosses the membrane as a helical span at residues 265 to 283; that stretch reads YPEIRLNRLLRISRMFEFF. At 284–291 the chain is on the cytoplasmic side; sequence QRTETRTN. Residues 292 to 315 traverse the membrane as a helical segment; the sequence is YPNIFRISNLVMYIIIIIHWNACV. The segment at 293–402 is ion conduction pathway; the sequence is PNIFRISNLV…NIGSMISNMN (110 aa). At 316–342 the chain is on the extracellular side; the sequence is YFSISKAIGFGNDTWVYPDVNDPDFGR. Asn327 is a glycosylation site (N-linked (GlcNAc...) asparagine). 2 consecutive transmembrane segments (helical) span residues 343-373 and 374-399; these read LARK…DSEY and FFVV…SMIS. Residues 360-363 are selectivity filter; it reads TIGE. Residues 400 to 690 lie on the Cytoplasmic side of the membrane; that stretch reads NMNAARAEFQ…ESGPTDSTQD (291 aa). Residues 403 to 479 are C-linker; sequence AARAEFQARI…DTLKKVRIFA (77 aa). The segment at 482 to 603 is cyclic nucleotide-binding domain (CNBD); that stretch reads EAGLLVELVL…EEKGKQILMK (122 aa). Gly543, Ser546, Arg559, and Thr560 together coordinate 3',5'-cyclic GMP. 3',5'-cyclic AMP is bound by residues Arg559 and Thr560. Residues 621-664 are a coiled coil; the sequence is LEEKVTRMESSVDLLQTRFARILAEYESMQQKLKQRLTKVEKFL.

It belongs to the cyclic nucleotide-gated cation channel (TC 1.A.1.5) family. CNGA1 subfamily. Forms a heterotetramer with CNGB1 in a 3:1 ratio. May also form cyclic nucleotide-activated homotetrameric channels, that are efficiently activated by saturating cGMP, but poorly activated by saturating cAMP compared to the heterotetramer with CNGB1. The channel binds Ca(2+)-bound CALM1 via CaM1 and CaM2 regions of the CNGB1 subunit; this interaction modulates the affinity of the channel for cNMPs in response to intracellular Ca(2+) levels. As to expression, expressed in the retina, in rod cells (at protein level).

Its subcellular location is the cell membrane. It catalyses the reaction Ca(2+)(in) = Ca(2+)(out). The enzyme catalyses Na(+)(in) = Na(+)(out). It carries out the reaction K(+)(in) = K(+)(out). The catalysed reaction is NH4(+)(in) = NH4(+)(out). It catalyses the reaction Rb(+)(in) = Rb(+)(out). The enzyme catalyses Li(+)(in) = Li(+)(out). It carries out the reaction Cs(+)(in) = Cs(+)(out). Functionally, pore-forming subunit of the rod cyclic nucleotide-gated channel. Mediates rod photoresponses at dim light converting transient changes in intracellular cGMP levels into electrical signals. In the dark, cGMP levels are high and keep the channel open enabling a steady inward current carried by Na(+) and Ca(2+) ions that leads to membrane depolarization and neurotransmitter release from synaptic terminals. Upon photon absorption cGMP levels decline leading to channel closure and membrane hyperpolarization that ultimately slows neurotransmitter release and signals the presence of light, the end point of the phototransduction cascade. Conducts cGMP- and cAMP-gated ion currents, with permeability for monovalent and divalent cations. The selectivity for Ca(2+) over Na(+) increases with cGMP concentrations, whereas the selectivity among monovalent ions is independent of the cGMP levels. The polypeptide is Cyclic nucleotide-gated channel alpha-1 (Bos taurus (Bovine)).